A 333-amino-acid chain; its full sequence is Ornithine carbamoyltransferase (333 aa).

Carbamoyl phosphate is bound by residues 57–60 (STRT), Arg-108, and 135–138 (HPTQ). L-ornithine-binding positions include Asn-168, Asp-232, and 236–237 (SM). Carbamoyl phosphate is bound by residues 274 to 275 (CL) and Arg-319.

The protein belongs to the aspartate/ornithine carbamoyltransferase superfamily. OTCase family.

It is found in the cytoplasm. It carries out the reaction carbamoyl phosphate + L-ornithine = L-citrulline + phosphate + H(+). It functions in the pathway amino-acid degradation; L-arginine degradation via ADI pathway; carbamoyl phosphate from L-arginine: step 2/2. Reversibly catalyzes the transfer of the carbamoyl group from carbamoyl phosphate (CP) to the N(epsilon) atom of ornithine (ORN) to produce L-citrulline. The chain is Ornithine carbamoyltransferase from Pediococcus pentosaceus (strain ATCC 25745 / CCUG 21536 / LMG 10740 / 183-1w).